Reading from the N-terminus, the 155-residue chain is Reticulon-like protein B23 (155 aa).

The Reticulon domain maps to methionine 1 to aspartate 155. 2 consecutive transmembrane segments (helical) span residues serine 30 to phenylalanine 50 and isoleucine 117 to phenylalanine 137.

It is found in the endoplasmic reticulum membrane. The chain is Reticulon-like protein B23 (RTNLB23) from Arabidopsis thaliana (Mouse-ear cress).